The chain runs to 159 residues: 6,7-dimethyl-8-ribityllumazine synthase (159 aa).

Residues W26, 58 to 60, and 80 to 82 each bind 5-amino-6-(D-ribitylamino)uracil; these read AIE and VVI. Position 85–86 (85–86) interacts with (2S)-2-hydroxy-3-oxobutyl phosphate; that stretch reads ET. The active-site Proton donor is the H88. Position 113 (N113) interacts with 5-amino-6-(D-ribitylamino)uracil. Residue R127 participates in (2S)-2-hydroxy-3-oxobutyl phosphate binding.

The protein belongs to the DMRL synthase family. In terms of assembly, homopentamer.

It catalyses the reaction (2S)-2-hydroxy-3-oxobutyl phosphate + 5-amino-6-(D-ribitylamino)uracil = 6,7-dimethyl-8-(1-D-ribityl)lumazine + phosphate + 2 H2O + H(+). The protein operates within cofactor biosynthesis; riboflavin biosynthesis; riboflavin from 2-hydroxy-3-oxobutyl phosphate and 5-amino-6-(D-ribitylamino)uracil: step 1/2. Catalyzes the formation of 6,7-dimethyl-8-ribityllumazine by condensation of 5-amino-6-(D-ribitylamino)uracil with 3,4-dihydroxy-2-butanone 4-phosphate. This is the penultimate step in the biosynthesis of riboflavin. The chain is 6,7-dimethyl-8-ribityllumazine synthase from Mycolicibacterium gilvum (strain PYR-GCK) (Mycobacterium gilvum (strain PYR-GCK)).